We begin with the raw amino-acid sequence, 291 residues long: uncharacterized protein (291 aa).

Belongs to the PhyH family.

This is an uncharacterized protein from Mycobacterium bovis (strain ATCC BAA-935 / AF2122/97).